A 202-amino-acid polypeptide reads, in one-letter code: Putative zinc finger protein ZK686.5 (202 aa).

Residues 43-63 are disordered; sequence RKNVDNTSTRKPYSYKDRKRK. 3 C2H2-type zinc fingers span residues 110 to 133, 138 to 160, and 169 to 192; these read TYCELCEQNFSSSKMLLLHRGKVH, IECHLCMKLFSQTIQFNRHMKTH, and VQCELCDRQFKDKQSLRTHWDVSH.

It is found in the nucleus. This Caenorhabditis elegans protein is Putative zinc finger protein ZK686.5.